A 470-amino-acid polypeptide reads, in one-letter code: ATP synthase subunit beta (470 aa).

ATP is bound at residue 151 to 158; the sequence is GGAGVGKT.

Belongs to the ATPase alpha/beta chains family. In terms of assembly, F-type ATPases have 2 components, CF(1) - the catalytic core - and CF(0) - the membrane proton channel. CF(1) has five subunits: alpha(3), beta(3), gamma(1), delta(1), epsilon(1). CF(0) has three main subunits: a(1), b(2) and c(9-12). The alpha and beta chains form an alternating ring which encloses part of the gamma chain. CF(1) is attached to CF(0) by a central stalk formed by the gamma and epsilon chains, while a peripheral stalk is formed by the delta and b chains.

It localises to the cell membrane. It catalyses the reaction ATP + H2O + 4 H(+)(in) = ADP + phosphate + 5 H(+)(out). Produces ATP from ADP in the presence of a proton gradient across the membrane. The catalytic sites are hosted primarily by the beta subunits. The polypeptide is ATP synthase subunit beta (Mycoplasma mobile (strain ATCC 43663 / 163K / NCTC 11711) (Mesomycoplasma mobile)).